The primary structure comprises 450 residues: Probable cysteine protease ATG4 (450 aa).

Residue Cys122 is the Nucleophile of the active site. Active-site residues include Asp297 and His299.

Belongs to the peptidase C54 family.

Its subcellular location is the cytoplasm. The protein localises to the nucleus. It is found in the preautophagosomal structure. It carries out the reaction [protein]-C-terminal L-amino acid-glycyl-phosphatidylethanolamide + H2O = [protein]-C-terminal L-amino acid-glycine + a 1,2-diacyl-sn-glycero-3-phosphoethanolamine. Functionally, cysteine protease that plays a key role in cytoplasm to vacuole transport (Cvt) and autophagy by mediating both proteolytic activation and delipidation of ATG8. Required for selective autophagic degradation of the nucleus (nucleophagy) as well as for mitophagy which contributes to regulate mitochondrial quantity and quality by eliminating the mitochondria to a basal level to fulfill cellular energy requirements and preventing excess ROS production. The protease activity is required for proteolytic activation of ATG8: cleaves the C-terminal amino acid of ATG8 to reveal a C-terminal glycine. ATG8 ubiquitin-like activity requires the exposure of the glycine at the C-terminus for its conjugation to phosphatidylethanolamine (PE) and its insertion to membranes, which is necessary for autophagy. The ATG8-PE conjugate mediates tethering between adjacent membranes and stimulates membrane hemifusion, leading to expansion of the autophagosomal membrane during autophagy. In addition to the protease activity, also catalyzes deconjugation of PE-conjugated forms of ATG8 during macroautophagy: ATG8 delipidation is required to release the protein from membranes, which facilitates multiple events during macroautophagy, and especially for efficient autophagosome biogenesis, the assembly of ATG9-containing tubulovesicular clusters into phagophores/autophagosomes, and for the disassembly of PAS-associated ATG components. ATG8 delipidation by ATG4 also recycles ATG8-PE generated on inappropriate membranes to maintain a reservoir of unlipidated ATG8 that is required for autophagosome formation at the PAS. The polypeptide is Probable cysteine protease ATG4 (ATG4) (Kluyveromyces lactis (strain ATCC 8585 / CBS 2359 / DSM 70799 / NBRC 1267 / NRRL Y-1140 / WM37) (Yeast)).